Here is a 264-residue protein sequence, read N- to C-terminus: Thymidylate synthase (264 aa).

Residues R21 and 126-127 (RR) each bind dUMP. C146 (nucleophile) is an active-site residue. DUMP-binding positions include 166 to 169 (RSAD), N177, and 207 to 209 (HLY). D169 is a binding site for (6R)-5,10-methylene-5,6,7,8-tetrahydrofolate. Position 263 (A263) interacts with (6R)-5,10-methylene-5,6,7,8-tetrahydrofolate.

It belongs to the thymidylate synthase family. Bacterial-type ThyA subfamily. Homodimer.

The protein localises to the cytoplasm. The catalysed reaction is dUMP + (6R)-5,10-methylene-5,6,7,8-tetrahydrofolate = 7,8-dihydrofolate + dTMP. It functions in the pathway pyrimidine metabolism; dTTP biosynthesis. Catalyzes the reductive methylation of 2'-deoxyuridine-5'-monophosphate (dUMP) to 2'-deoxythymidine-5'-monophosphate (dTMP) while utilizing 5,10-methylenetetrahydrofolate (mTHF) as the methyl donor and reductant in the reaction, yielding dihydrofolate (DHF) as a by-product. This enzymatic reaction provides an intracellular de novo source of dTMP, an essential precursor for DNA biosynthesis. This chain is Thymidylate synthase, found in Rhodopseudomonas palustris (strain BisB5).